Consider the following 158-residue polypeptide: MARRNKAKKRTSPDSRYGSVLLMRFINIIMKCGKKSIAEKIAYSALSLAEKKIGKDALSIFETAVENVTPSIEVRSRRIGGATYQVPVEIRQDRAISLALRWIARATSAARKKSGRTTVYCLQSEILDAYNKCGGAFKMCEEKYKMAEANKAFSHLRF.

This sequence belongs to the universal ribosomal protein uS7 family. As to quaternary structure, part of the 30S ribosomal subunit. Contacts proteins S9 and S11.

Its function is as follows. One of the primary rRNA binding proteins, it binds directly to 16S rRNA where it nucleates assembly of the head domain of the 30S subunit. Is located at the subunit interface close to the decoding center, probably blocks exit of the E-site tRNA. The polypeptide is Small ribosomal subunit protein uS7 (Wolbachia pipientis subsp. Culex pipiens (strain wPip)).